Here is a 432-residue protein sequence, read N- to C-terminus: Trigger factor (432 aa).

A PPIase FKBP-type domain is found at 161 to 246 (GKRVSIDFVG…VNKVEARQLP (86 aa)).

The protein belongs to the FKBP-type PPIase family. Tig subfamily.

The protein localises to the cytoplasm. The enzyme catalyses [protein]-peptidylproline (omega=180) = [protein]-peptidylproline (omega=0). In terms of biological role, involved in protein export. Acts as a chaperone by maintaining the newly synthesized protein in an open conformation. Functions as a peptidyl-prolyl cis-trans isomerase. In Vibrio vulnificus (strain CMCP6), this protein is Trigger factor.